We begin with the raw amino-acid sequence, 207 residues long: Vascular endothelial growth factor B (207 aa).

The N-terminal stretch at Met-1–Ala-21 is a signal peptide. 2 disulfide bridges follow: Cys-78/Cys-122 and Cys-82/Cys-124. The tract at residues Ile-140–Ala-182 is disordered.

The protein belongs to the PDGF/VEGF growth factor family. Homodimer; disulfide-linked. Can also form heterodimer with VEGF.

Its subcellular location is the secreted. Its function is as follows. Growth factor for endothelial cells. VEGF-B167 binds heparin and neuropilin-1 whereas the binding to neuropilin-1 of VEGF-B186 is regulated by proteolysis. The sequence is that of Vascular endothelial growth factor B (Vegfb) from Rattus norvegicus (Rat).